The following is a 138-amino-acid chain: Large ribosomal subunit protein bL17 (138 aa).

Residues 118–138 are disordered; sequence RDEDAKGKDSGPSQDGAAEAA.

This sequence belongs to the bacterial ribosomal protein bL17 family. As to quaternary structure, part of the 50S ribosomal subunit. Contacts protein L32.

In Rhodopseudomonas palustris (strain HaA2), this protein is Large ribosomal subunit protein bL17.